Here is a 2370-residue protein sequence, read N- to C-terminus: Genome polyprotein (2370 aa).

Gly112 carries the N-myristoyl glycine; by host lipid modification. Disordered stretches follow at residues 140-173 and 704-736; these read VGDM…GNVV and GADG…FDYP. The segment covering 154–171 has biased composition (low complexity); sequence GSNKGGSSTSPKSTSNGN. Residues 713-725 show a composition bias toward polar residues; it reads APTSDLSDGNPTT. Residues 1358 to 1522 enclose the SF3 helicase domain; sequence YSTALSAISL…AAFSAAAALK (165 aa). 1384-1391 is an ATP binding site; that stretch reads GPPGTGKS. Gly1597 carries N-myristoyl glycine; by host lipidation. Residues 1646–1666 traverse the membrane as a helical segment; it reads IFAASSFLSLIAATLTIVRCL. A disordered region spans residues 1674–1696; it reads GAYSGTPVPKPRKKDLPKQPVYS. The residue at position 1676 (Tyr1676) is an O-(5'-phospho-RNA)-tyrosine. The Peptidase C3 domain maps to 1697-1886; that stretch reads GPVRRQGFDP…FSARLTPERV (190 aa). Active-site for protease 3C activity residues include His1745, Glu1776, and Cys1849. The span at 2007–2016 shows a compositional bias: polar residues; the sequence is SPGYPWTTQG. Positions 2007 to 2026 are disordered; it reads SPGYPWTTQGRSRRSLFDED. The RdRp catalytic domain maps to 2122–2239; it reads SNVWSIDYSC…GSNQDFHPRE (118 aa). Catalysis depends on for RdRp activity residues Asp2128 and Asp2225.

Interacts with capsid protein VP1. Interacts with capsid protein VP3. In terms of assembly, interacts with capsid protein VP0. Interacts with capsid protein VP3. As to quaternary structure, interacts with capsid protein VP0. Interacts with capsid protein VP1. Homodimer. Interacts with protein 2B. Interacts with protein 2C. In terms of assembly, homodimer. Interacts with host ABCD3. Interacts with protein 2A. Interacts with host ACBD3. As to quaternary structure, homodimer. Interacts with host ABCD3. Interacts with protein 2A. Interacts with protein 3A. Interacts with protein 3C. Interacts with host ACBD3. Homodimer. Interacts with host ABCD3 (via GOLD domain) and PI4KB; these interactions allow the formation of a viral protein/ACBD3/PI4KB complex in order to synthesize PI4P at the viral RNA replication sites. Interacts with protein 2C. Interacts with protein 3C. Protein 3C: Interacts with protein 2A. Protein 3C: Interacts with protein 2C. Specific enzymatic cleavages by the viral protease in vivo yield a variety of precursors and mature proteins. The leader protein-VP0 junction is cleaved by 3C proteinase. The VP1/2A junction is cleaved by the protein 3CD in association with protein 2A. Post-translationally, uridylylated by the polymerase and is covalently linked to the 5'-end of genomic RNA. This uridylylated form acts as a nucleotide-peptide primer for the polymerase.

The protein resides in the virion. It localises to the host cytoplasm. It is found in the host cytoplasmic vesicle membrane. Its subcellular location is the host Golgi apparatus membrane. The enzyme catalyses RNA(n) + a ribonucleoside 5'-triphosphate = RNA(n+1) + diphosphate. It carries out the reaction Selective cleavage of Gln-|-Gly bond in the poliovirus polyprotein. In other picornavirus reactions Glu may be substituted for Gln, and Ser or Thr for Gly.. It catalyses the reaction ATP + H2O = ADP + phosphate + H(+). Its function is as follows. Required for viral RNA replication and viral RNA encapsidation. Does not have any proteolytic activity. Forms an icosahedral capsid of pseudo T=3 symmetry with capsid proteins VP0 and VP3. Together they form an icosahedral capsid composed of 60 copies of each VP0, VP1, and VP3. All the three latter proteins contain a beta-sheet structure called beta-barrel jelly roll. In terms of biological role, forms an icosahedral capsid of pseudo T=3 symmetry with capsid proteins VP1 and VP3. Together they form an icosahedral capsid composed of 60 copies of each VP0, VP1, and VP3. All the three latter proteins contain a beta-sheet structure called beta-barrel jelly roll. Functionally, forms an icosahedral capsid of pseudo T=3 symmetry with capsid proteins VP0 and VP1. Together they form an icosahedral capsid composed of 60 copies of each VP0, VP1, and VP3. All the three latter proteins contain a beta-sheet structure called beta-barrel jelly roll. Its function is as follows. Required for viral RNA replication. Does not have any proteolytic activity. Affects membrane integrity and causes an increase in membrane permeability. In terms of biological role, induces and associates with structural rearrangements of intracellular membranes. Displays RNA-binding, nucleotide binding and NTPase activities. May play a role in virion morphogenesis and viral RNA encapsidation by interacting with the capsid protein VP3. Functionally, serves as membrane anchor via its hydrophobic domain. Plays an essential role in viral RNA replication by recruiting PI4KB at the viral replication sites, thereby allowing the formation of rearranged membranous structures where viral replication takes place. Its function is as follows. Forms a primer, VPg-pU, which is utilized by the polymerase for the initiation of RNA chains. Cysteine protease that generates mature viral proteins from the precursor polyprotein. In addition to its proteolytic activity, it binds to viral RNA, and thus influences viral genome replication. RNA and substrate cooperatively bind to the protease. In terms of biological role, replicates the genomic and antigenomic RNAs by recognizing replications specific signals. Performs VPg uridylylation. In Homo sapiens (Human), this protein is Genome polyprotein.